Consider the following 468-residue polypeptide: Anthocyanidin 3-O-glucoside 2'''-O-xylosyltransferase (468 aa).

UDP-alpha-D-xylose contacts are provided by residues Ser284, Ile344–Gln346, His361–Glu369, and His383–Gln386.

It belongs to the UDP-glycosyltransferase family.

The enzyme catalyses an anthocyanidin 3-O-beta-D-glucoside + UDP-alpha-D-xylose = an anthocyanidin 3-O-beta-D-sambubioside + UDP + 2 H(+). It participates in secondary metabolite biosynthesis; flavonoid biosynthesis. Functionally, contributes to the last few anthocyanin biosynthetic steps. Converts cyanidin 3-O-glucoside to cyanidin 3-O-xylosyl(1-&gt;2)glucoside. Can use 3-O-glucosylated anthocyanidins/flavonols and uridine diphosphate (UDP)-xylose as substrates. In Arabidopsis thaliana (Mouse-ear cress), this protein is Anthocyanidin 3-O-glucoside 2'''-O-xylosyltransferase (A3G2XYLT).